The sequence spans 150 residues: Endoribonuclease YbeY (150 aa).

3 residues coordinate Zn(2+): H112, H116, and D122.

It belongs to the endoribonuclease YbeY family. Zn(2+) is required as a cofactor.

The protein resides in the cytoplasm. Its function is as follows. Single strand-specific metallo-endoribonuclease involved in late-stage 70S ribosome quality control and in maturation of the 3' terminus of the 16S rRNA. This chain is Endoribonuclease YbeY, found in Protochlamydia amoebophila (strain UWE25).